The chain runs to 269 residues: Fructose-2,6-bisphosphatase TIGAR (269 aa).

Histidine 11 (tele-phosphohistidine intermediate) is an active-site residue. Glutamate 89 (proton donor/acceptor) is an active-site residue.

Belongs to the phosphoglycerate mutase family. As to quaternary structure, interacts with HK2; the interaction increases hexokinase HK2 activity in a hypoxia- and HIF1A-dependent manner, resulting in the regulation of mitochondrial membrane potential, thus increasing NADPH production and decreasing intracellular ROS levels. In terms of tissue distribution, expressed in olfactory bulb, cerebellum, and cortex. Expressed in neurons and astrocytes (at protein level). Expressed in intestinal crypt.

Its subcellular location is the cytoplasm. The protein localises to the nucleus. The protein resides in the mitochondrion. The enzyme catalyses beta-D-fructose 2,6-bisphosphate + H2O = beta-D-fructose 6-phosphate + phosphate. In terms of biological role, fructose-bisphosphatase hydrolyzing fructose-2,6-bisphosphate as well as fructose-1,6-bisphosphate. Acts as a negative regulator of glycolysis by lowering intracellular levels of fructose-2,6-bisphosphate in a p53/TP53-dependent manner, resulting in the pentose phosphate pathway (PPP) activation and NADPH production. Contributes to the generation of reduced glutathione to cause a decrease in intracellular reactive oxygen species (ROS) content, correlating with its ability to protect cells from oxidative or metabolic stress-induced cell death. Plays a role in promoting protection against cell death during hypoxia by decreasing mitochondria ROS levels in a HK2-dependent manner through a mechanism that is independent of its fructose-bisphosphatase activity. In response to cardiac damage stress, mediates p53-induced inhibition of myocyte mitophagy through ROS levels reduction and the subsequent inactivation of BNIP3. Reduced mitophagy results in an enhanced apoptotic myocyte cell death, and exacerbates cardiac damage. Plays a role in adult intestinal regeneration; contributes to the growth, proliferation and survival of intestinal crypts following tissue ablation. Plays a neuroprotective role against ischemic brain damage by enhancing PPP flux and preserving mitochondria functions. Protects glioma cells from hypoxia- and ROS-induced cell death by inhibiting glycolysis and activating mitochondrial energy metabolism and oxygen consumption in a TKTL1-dependent and p53/TP53-independent manner. Plays a role in cancer cell survival by promoting DNA repair through activating PPP flux in a CDK5-ATM-dependent signaling pathway during hypoxia and/or genome stress-induced DNA damage responses. Involved in intestinal tumor progression. In Mus musculus (Mouse), this protein is Fructose-2,6-bisphosphatase TIGAR.